The sequence spans 21 residues: Large ribosomal subunit protein uL10 (21 aa).

The protein belongs to the universal ribosomal protein uL10 family. Part of the ribosomal stalk of the 50S ribosomal subunit. The N-terminus interacts with L11 and the large rRNA to form the base of the stalk. The C-terminus forms an elongated spine to which L12 dimers bind in a sequential fashion forming a multimeric L10(L12)X complex.

Functionally, forms part of the ribosomal stalk, playing a central role in the interaction of the ribosome with GTP-bound translation factors. The chain is Large ribosomal subunit protein uL10 (rplJ) from Proteus vulgaris.